A 767-amino-acid polypeptide reads, in one-letter code: ABC transporter B family member 4 (767 aa).

The segment at 81–104 (NYSSSSNSGNNNNNNYNNKNNNNN) is disordered. 5 helical membrane passes run 208 to 228 (IWLF…GLQI), 252 to 272 (AIFI…MISV), 324 to 344 (VSLG…LILI), 350 to 370 (LGMM…AGWL), and 429 to 449 (IGIF…LVYW). One can recognise an ABC transmembrane type-1 domain in the interval 211-491 (FGFGIITAFF…LSILFTQIMS (281 aa)). One can recognise an ABC transporter domain in the interval 524-760 (IKFINVDFKY…KGLYYKLVQR (237 aa)). 559–566 (GSSGGGKS) is a binding site for ATP.

This sequence belongs to the ABC transporter superfamily. ABCB family. Multidrug resistance exporter (TC 3.A.1.201) subfamily.

It localises to the membrane. This is ABC transporter B family member 4 (abcB4) from Dictyostelium discoideum (Social amoeba).